The sequence spans 181 residues: Large ribosomal subunit protein uL5 (181 aa).

The protein belongs to the universal ribosomal protein uL5 family. Part of the 50S ribosomal subunit; part of the 5S rRNA/L5/L18/L25 subcomplex. Contacts the 5S rRNA and the P site tRNA. Forms a bridge to the 30S subunit in the 70S ribosome.

Functionally, this is one of the proteins that bind and probably mediate the attachment of the 5S RNA into the large ribosomal subunit, where it forms part of the central protuberance. In the 70S ribosome it contacts protein S13 of the 30S subunit (bridge B1b), connecting the 2 subunits; this bridge is implicated in subunit movement. Contacts the P site tRNA; the 5S rRNA and some of its associated proteins might help stabilize positioning of ribosome-bound tRNAs. This Campylobacter jejuni subsp. jejuni serotype O:6 (strain 81116 / NCTC 11828) protein is Large ribosomal subunit protein uL5.